The primary structure comprises 24 residues: Fibrinogen gamma chain (24 aa).

In terms of assembly, heterohexamer; disulfide linked. Contains 2 sets of 3 non-identical chains (alpha, beta and gamma). The 2 heterotrimers are in head to head conformation with the N-termini in a small central domain. Post-translationally, conversion of fibrinogen to fibrin is triggered by thrombin, which cleaves fibrinopeptides A and B from alpha and beta chains, and thus exposes the N-terminal polymerization sites responsible for the formation of the soft clot. The soft clot is converted into the hard clot by factor XIIIA which catalyzes the epsilon-(gamma-glutamyl)lysine cross-linking between gamma chains (stronger) and between alpha chains (weaker) of different monomers.

It localises to the secreted. Together with fibrinogen alpha (FGA) and fibrinogen beta (FGB), polymerizes to form an insoluble fibrin matrix. Has a major function in hemostasis as one of the primary components of blood clots. In addition, functions during the early stages of wound repair to stabilize the lesion and guide cell migration during re-epithelialization. Was originally thought to be essential for platelet aggregation, based on in vitro studies using anticoagulated blood. However, subsequent studies have shown that it is not absolutely required for thrombus formation in vivo. Enhances expression of SELP in activated platelets via an ITGB3-dependent pathway. Maternal fibrinogen is essential for successful pregnancy. Fibrin deposition is also associated with infection, where it protects against IFNG-mediated hemorrhage. May also facilitate the antibacterial immune response via both innate and T-cell mediated pathways. The polypeptide is Fibrinogen gamma chain (FGG) (Canis lupus familiaris (Dog)).